Here is a 463-residue protein sequence, read N- to C-terminus: T-box transcription factor TBX1-A (463 aa).

Disordered stretches follow at residues 39–58 (SPSP…PCSA) and 75–104 (GASS…VKKN). Residues 75 to 96 (GASSSSCASSTPGSGSTGSSSS) show a composition bias toward low complexity. The segment at residues 119–297 (LWDEFNQLGT…SNPFAKGFRD (179 aa)) is a DNA-binding region (T-box). Disordered regions lie at residues 320 to 354 (RSRN…PLHG) and 377 to 409 (VPLS…PYKY). Polar residues predominate over residues 323 to 332 (NPVSSPTQNG). The span at 333-347 (SDKDGDGRREYERDA) shows a compositional bias: basic and acidic residues. The Nuclear localization signal motif lies at 420–431 (KTRPAPYPLPTI).

Binds DNA as a dimer. Interacts with dscr6/ripply3.

Its subcellular location is the nucleus. In terms of biological role, probable transcriptional regulator involved in developmental processes. Binds to the palindromic T site 5'-TTCACACCTAGGTGTGAA-3' DNA sequence. Induces pre-placodal ectoderm (PPE) gene expression in regions where RIPPLY3 is absent. Plays a role in the formation of the anteroposterior (AP) axis during embryonic development; required to establish the posterolateral border of the pre-placodal ectoderm (PPE) acting downstream of the retinoic acid receptor (RAR) signaling. The polypeptide is T-box transcription factor TBX1-A (tbx1-a) (Xenopus laevis (African clawed frog)).